A 343-amino-acid chain; its full sequence is Protein RecA (343 aa).

Gly66–Thr73 is an ATP binding site. A disordered region spans residues Ile319–Ala343.

This sequence belongs to the RecA family.

It localises to the cytoplasm. Functionally, can catalyze the hydrolysis of ATP in the presence of single-stranded DNA, the ATP-dependent uptake of single-stranded DNA by duplex DNA, and the ATP-dependent hybridization of homologous single-stranded DNAs. It interacts with LexA causing its activation and leading to its autocatalytic cleavage. This is Protein RecA from Thioalkalivibrio sulfidiphilus (strain HL-EbGR7).